Consider the following 787-residue polypeptide: Phenylalanine--tRNA ligase beta subunit (787 aa).

The tRNA-binding domain maps to 39–149 (APAFAGVVIA…EDAPVGTNIR (111 aa)). The B5 domain occupies 400 to 475 (PEVKQVGLRL…RVYGYENIPD (76 aa)). Positions 453, 459, 462, and 463 each coordinate Mg(2+). One can recognise an FDX-ACB domain in the interval 694-786 (SKFQPVRRDL…AATAAGARLR (93 aa)).

Belongs to the phenylalanyl-tRNA synthetase beta subunit family. Type 1 subfamily. Tetramer of two alpha and two beta subunits. Mg(2+) is required as a cofactor.

It is found in the cytoplasm. It carries out the reaction tRNA(Phe) + L-phenylalanine + ATP = L-phenylalanyl-tRNA(Phe) + AMP + diphosphate + H(+). This Neisseria meningitidis serogroup A / serotype 4A (strain DSM 15465 / Z2491) protein is Phenylalanine--tRNA ligase beta subunit (pheT).